The following is a 1483-amino-acid chain: MILRRLLLAGSLLLASLAAAKKEGPKITATKFDHEPRHLFYFEDTDTVVFQHKYDAHISTDAGQSWSVIKGPDDGMVGKVKSIYPHPHDRKKAYVFGQSRTHWVTEDAGKSWRAFKIEQDIPRSGNPLAFHGTDSDKLILHTIDCSGFVCDMPALYTTDGFKSHKTLTKSQHGCNWAITTPEFGTQADLPEKIDNRVFCIFSGLHAPMGRNKRLLYSDNFFEDDKGFEVPLNNGRPVSDVVRLAGVKKFLVAAAKSPRTTEMTLYVTDDATRWHQAMFDGHKLENDAYTVLESTNYSIQVGVKTTGGFNPMSALYTSNSEGIYFTRNAEHVNSNHLGYIDFEKIAGIQGIFLINTVSNWEEIDNNHQRKKKVVSQISFDDGRTFHDIKAGDKKLHLHSVAQLHNSGRVFSSPAPGVVMGVGNVGDHLKEYDEGDLYVSNDAGITWSKALEDAHKYEFGDLGSVLVAVYDEGRTNKVSYSIDHGKHWETAELPHKIRARVLTTTPDSTSLKFVLIGTSKSGSGVEHSVIGIDFSNLHERKCGKDDFERWPARLNEKNEPDCLMGHKQFYSRRKAGSECFIGSEFKDPVPELERCKCTEEDFECDFNFVRSKDRKDCVPARALPVPEGQCKKPDDKYTGSSGFRLIPGNDCVKDGGIELDKPKERPCSDAAKEPVSGEIDVTKHFFSANKPAEYYYLERPVLSKDKDETIVMLTDKLEVFITRDHGKTWKETLEGKHVVKLWPHTYINDAMYFITGEKRVIVTKNRGDSFREFETKLLPNRDRLPVLAFHPDPERSDWLIWTGADNCGRGGDCHSVAHYSTDGGDEWHTLMRYVGRCEFIGKERSRKTDELIFCAQHENENPKNRHLRLVSSDSWFKDKTVHYNNILDFRTMAEFIIVAARSEKDSLKVGASIDGKTFADAEFPANFDVKVQQAYTVLDSSTHSVWLHVTVHNVEDHQYGSIIKSNSNGTSYVLSLNNVNRNNADYVDFEKMEGLEGVALVNVVANVDEVQKGAAKQLRTMITHNDGAEWAYIRPPAKDADGRAYSCSPGKKGTEECGLHLHSFTERPDYRDTFSSPSAVGLMLAVGNVGDHLTLKSEGDTFITRDGGIEWHSVKKGNYIWEYGDQGSIIVIVPEAKPTKALFYTLDEGKTWTEFAFSEVEMLILDISTVPSDTSRNFLLWGKEVGSGSKPGFATVNIDFSGLKERSKECVLKEDKPEADDYYLWEPKHPLLEDNCLFGHITRYHRKKPEASCYNGGDFERLHNVSTNCECTRQDYECDYNFERQSDGSCALVPGHQPLDPKRICTEDSKAIEYFEPTGYRRIPLTTCEGGLKLDGFKAFPCPNKEKEFEKKHPRLHGAGLFFAIVLPIAAAGVVGYYVYTRWDGKFGRIRLGESGSSGDWLSRDSPLIAIPIAIIAGTVAVLSALPLLAASLWRSARGWTPIGRSSRPYSSRGAFAARRGDYVGVVEDEDELLGAEDFEEDEEV.

A signal peptide spans 1–20 (MILRRLLLAGSLLLASLAAA). The Lumenal portion of the chain corresponds to 21–1356 (KKEGPKITAT…FEKKHPRLHG (1336 aa)). BNR repeat units follow at residues 58-67 (ISTDAGQSWS) and 103-113 (WVTEDAGKSWR). A glycan (N-linked (GlcNAc...) asparagine) is linked at asparagine 295. BNR repeat units lie at residues 375 to 385 (QISFDDGRTFH), 436 to 447 (YVSNDAGITWSK), 478 to 487 (YSIDHGKHWE), 718 to 728 (FITRDHGKTWK), and 817 to 826 (YSTDGGDEWH). Asparagine 966 carries an N-linked (GlcNAc...) asparagine glycan. BNR repeat units follow at residues 1100–1110 (FITRDGGIEWH) and 1141–1151 (FYTLDEGKTWT). Asparagine 1262 carries an N-linked (GlcNAc...) asparagine glycan. A helical membrane pass occupies residues 1357–1377 (AGLFFAIVLPIAAAGVVGYYV). The Cytoplasmic portion of the chain corresponds to 1378 to 1405 (YTRWDGKFGRIRLGESGSSGDWLSRDSP). Residues 1406–1426 (LIAIPIAIIAGTVAVLSALPL) form a helical membrane-spanning segment. At 1427–1483 (LAASLWRSARGWTPIGRSSRPYSSRGAFAARRGDYVGVVEDEDELLGAEDFEEDEEV) the chain is on the lumenal side.

Belongs to the VPS10-related sortilin family.

Its subcellular location is the golgi apparatus. It is found in the trans-Golgi network membrane. It localises to the prevacuolar compartment membrane. In terms of biological role, functions as a sorting receptor in the Golgi compartment required for the intracellular sorting and delivery of soluble vacuolar proteins, like carboxypeptidase Y (CPY) and proteinase A. Executes multiple rounds of sorting by cycling between the late Golgi and a prevacuolar endosome-like compartment. This chain is Vacuolar protein sorting/targeting protein 10 (VPS10), found in Uncinocarpus reesii (strain UAMH 1704).